The chain runs to 637 residues: CREB-regulated transcription coactivator 3 (637 aa).

S66 carries the phosphoserine modification. Basic residues predominate over residues 105 to 115 (NRLHSSHHRPI). Disordered regions lie at residues 105–184 (NRLH…SLQD) and 269–288 (HFPS…YANI). At S133 the chain carries Phosphoserine. T143 is subject to Phosphothreonine. S145 is modified (phosphoserine; by SIK2). Over residues 145-159 (SDSALHTSASSTKSQ) the composition is skewed to polar residues. Position 151 is a phosphothreonine (T151). Residue S293 is modified to Phosphoserine. Residues 299–462 (AMTHLGISGS…QNYQPPSPVP (164 aa)) form a disordered region. Over residues 309–337 (PGMQNTRSNPSIQATMNNNSLASNVNSHT) the composition is skewed to polar residues. The segment covering 344–365 (PALHPSLRLSSLSNPSLPTSAL) has biased composition (low complexity). Residues S377 and S396 each carry the phosphoserine modification. Residues 377-395 (SPLTLTPGSESNRSISNQF) are compositionally biased toward polar residues. The segment covering 396–407 (SPTSPMNMPPNS) has biased composition (low complexity). The span at 418–429 (SLPPLEPPPPYP) shows a compositional bias: pro residues. Low complexity predominate over residues 430–447 (LYSDQPQPHLHHTQQQMH). S561 is modified (phosphoserine). Positions 615–637 (MLSDPDMVLPDPSIEDSFRSDKL) are disordered.

Belongs to the TORC family. In terms of assembly, binding, as a tetramer, through its N-terminal region, with the bZIP domain of creb1 enhances recruitment of taf4 to the promoter. 'Arg-300' in the bZIP domain of creb1 is essential for this interaction.

The protein resides in the nucleus. The protein localises to the cytoplasm. Functionally, transcriptional coactivator for creb1 which activates transcription through both consensus and variant cAMP response element (CRE) sites. Acts as a coactivator, in the SIK/TORC signaling pathway, being active when dephosphorylated and acts independently of creb1 'Ser-119' phosphorylation. Enhances the interaction of creb1 with taf4. Regulates the expression of specific CREB-activated genes such as the steroidogenic gene, StAR. Potent coactivator of ppargc1a and inducer of mitochondrial biogenesis in muscle cells. This Xenopus tropicalis (Western clawed frog) protein is CREB-regulated transcription coactivator 3 (crtc3).